Consider the following 122-residue polypeptide: Glycine cleavage system H protein (122 aa).

In terms of domain architecture, Lipoyl-binding spans 19-101; that stretch reads TATIGITKHA…EGNSWLYKIK (83 aa). Lys-60 carries the N6-lipoyllysine modification.

Belongs to the GcvH family. As to quaternary structure, the glycine cleavage system is composed of four proteins: P, T, L and H. (R)-lipoate serves as cofactor.

Functionally, the glycine cleavage system catalyzes the degradation of glycine. The H protein shuttles the methylamine group of glycine from the P protein to the T protein. The polypeptide is Glycine cleavage system H protein (Dinoroseobacter shibae (strain DSM 16493 / NCIMB 14021 / DFL 12)).